A 190-amino-acid chain; its full sequence is MIIVIMGVSGSGKTVVGSQLAKKLGWNFYDADDYHPLENKEKMSQGTPLNDQDRHPWLCELHEIMMREKALGQHVVLACSALKRAYRSTLLTGSTPHWPENYQENDDLSSDTLFVHLHGSLEILSRRLLERKGHFMPRTLLDSQIDTLEPPSAPERFIAIDVDKDISVIVSEIEGEVDRKMMLVKSAQKD.

Residue 7-14 (GVSGSGKT) participates in ATP binding.

Belongs to the gluconokinase GntK/GntV family.

It catalyses the reaction D-gluconate + ATP = 6-phospho-D-gluconate + ADP + H(+). Its pathway is carbohydrate acid metabolism; D-gluconate degradation. The chain is Probable gluconokinase (idnk) from Xenopus tropicalis (Western clawed frog).